The primary structure comprises 422 residues: Elongation factor 1-alpha (422 aa).

Positions 5–221 (KPHMNLAVIG…NNLKVPEKPS (217 aa)) constitute a tr-type G domain. The interval 14–21 (GHIDHGKS) is G1. 14 to 21 (GHIDHGKS) serves as a coordination point for GTP. Position 21 (Ser-21) interacts with Mg(2+). Residues 70–74 (GITID) form a G2 region. Residues 91–94 (DCPG) form a G3 region. GTP is bound by residues 91–95 (DCPGH) and 146–149 (NKMD). A G4 region spans residues 146 to 149 (NKMD). Residues 185-187 (SAF) are G5.

It belongs to the TRAFAC class translation factor GTPase superfamily. Classic translation factor GTPase family. EF-Tu/EF-1A subfamily.

The protein localises to the cytoplasm. It carries out the reaction GTP + H2O = GDP + phosphate + H(+). Its function is as follows. GTP hydrolase that promotes the GTP-dependent binding of aminoacyl-tRNA to the A-site of ribosomes during protein biosynthesis. The sequence is that of Elongation factor 1-alpha from Methanosarcina barkeri (strain Fusaro / DSM 804).